Consider the following 319-residue polypeptide: Ribonucleoside-diphosphate reductase small chain (319 aa).

Aspartate 70, glutamate 101, and histidine 104 together coordinate Fe cation. Tyrosine 108 is a catalytic residue. The Fe cation site is built by glutamate 163, glutamate 197, and histidine 200. The segment at 313-319 is interaction with R1; it reads FSLDVDF.

Belongs to the ribonucleoside diphosphate reductase small chain family. As to quaternary structure, interacts with RNR1/OPG080 subunit. Can interact with host RNR1 supunit. It depends on Fe cation as a cofactor.

It carries out the reaction a 2'-deoxyribonucleoside 5'-diphosphate + [thioredoxin]-disulfide + H2O = a ribonucleoside 5'-diphosphate + [thioredoxin]-dithiol. Ribonucleoside-diphosphate reductase holoenzyme provides the precursors necessary for viral DNA synthesis. Allows virus growth in non-dividing cells. Catalyzes the biosynthesis of deoxyribonucleotides from the corresponding ribonucleotides. This Bos taurus (Bovine) protein is Ribonucleoside-diphosphate reductase small chain (OPG048).